Here is a 378-residue protein sequence, read N- to C-terminus: Calponin homolog OV9M (378 aa).

The segment covering 1–20 has biased composition (low complexity); it reads MPAQPAQENAQDADDAQANA. The disordered stretch occupies residues 1–35; it reads MPAQPAQENAQDADDAQANATMETRVAGQGQPKRV. Calponin-like repeat units lie at residues 50–75, 98–123, 151–176, 197–222, 244–269, 285–310, and 330–355; these read IPSQ…RNTQ, VRLQ…RDVC, VRLQ…RRET, IPLQ…RRET, IPSQ…RWEV, VRLQ…RNTT, and IPSQ…RDVK. The tract at residues 175-194 is disordered; the sequence is ETTKMTDSKHPDYDHERPDQ. Residues 230 to 256 are disordered; it reads HPEYDPESSIDSSTIPSQMGSNKYASQ. The span at 238 to 256 shows a compositional bias: polar residues; it reads SIDSSTIPSQMGSNKYASQ. Positions 331-352 are disordered; that stretch reads PSQAGWNRGDSQKGMTGFGAPR.

It belongs to the calponin family. As to expression, found in the longitudinal muscles below the hypodermis.

Could be involved in muscle contraction. This is Calponin homolog OV9M from Onchocerca volvulus.